Here is a 154-residue protein sequence, read N- to C-terminus: Histone H2B.v3 (154 aa).

The segment covering 1–11 (MVFVKGQKKAT) has biased composition (basic residues). Positions 1–48 (MVFVKGQKKATKGSTQSGEEKTASTTPKVTKTPTEGGEKKRKKRKSDY) are disordered. Residues 12-27 (KGSTQSGEEKTASTTP) are compositionally biased toward polar residues.

It belongs to the histone H2B family. The nucleosome is a histone octamer containing two molecules each of H2A, H2B, H3 and H4 assembled in one H3-H4 heterotetramer and two H2A-H2B heterodimers. The octamer wraps approximately 147 bp of DNA.

It is found in the nucleus. It localises to the chromosome. Core component of nucleosome which plays a central role in DNA double strand break (DSB) repair. Nucleosomes wrap and compact DNA into chromatin, limiting DNA accessibility to the cellular machineries which require DNA as a template. Histones thereby play a central role in transcription regulation, DNA repair, DNA replication and chromosomal stability. DNA accessibility is regulated via a complex set of post-translational modifications of histones, also called histone code, and nucleosome remodeling. The polypeptide is Histone H2B.v3 (H2Bv3) (Dictyostelium discoideum (Social amoeba)).